The sequence spans 340 residues: Delta(1)-pyrroline-2-carboxylate reductase 1 (340 aa).

The active-site Charge relay system is the Ser-50. The Proton donor role is filled by His-51. Arg-55 serves as a coordination point for substrate. Residue 123–127 participates in NADP(+) binding; sequence HFSAL. Residue Thr-163 coordinates substrate. 181–183 contacts NADP(+); it reads DFA. Substrate is bound at residue 189-190; sequence RG. Asp-191 acts as the Charge relay system in catalysis. NADP(+) contacts are provided by residues 232–233 and 307–313; these read HK and RLPSQRR.

Belongs to the LDH2/MDH2 oxidoreductase family. As to quaternary structure, homodimer.

It carries out the reaction L-proline + NAD(+) = 1-pyrroline-2-carboxylate + NADH + H(+). It catalyses the reaction L-proline + NADP(+) = 1-pyrroline-2-carboxylate + NADPH + H(+). Functionally, catalyzes the reduction of Delta(1)-pyrroline-2-carboxylate (Pyr2C) to L-proline, using NADPH as the electron donor. May be involved in a degradation pathway that converts trans-3-hydroxy-L-proline (t3LHyp) to L-proline. The sequence is that of Delta(1)-pyrroline-2-carboxylate reductase 1 from Burkholderia ambifaria (strain ATCC BAA-244 / DSM 16087 / CCUG 44356 / LMG 19182 / AMMD) (Burkholderia cepacia (strain AMMD)).